The following is a 643-amino-acid chain: Carboxy-terminal kinesin 2 (643 aa).

Disordered stretches follow at residues Met1–Glu42 and Met81–Val101. The globular stretch occupies residues Met1–Lys116. Over residues Pro88 to Val101 the composition is skewed to polar residues. Residues Lys117–Arg296 are a coiled coil. Residues Asn294 to Cys633 enclose the Kinesin motor domain. Gly386–Thr393 is an ATP binding site.

This sequence belongs to the TRAFAC class myosin-kinesin ATPase superfamily. Kinesin family. NCD subfamily.

The protein resides in the cytoplasm. The protein localises to the cytoskeleton. In terms of biological role, promotes mitotic spindle assembly. This chain is Carboxy-terminal kinesin 2, found in Xenopus laevis (African clawed frog).